An 86-amino-acid chain; its full sequence is Large ribosomal subunit protein bL27 (86 aa).

The tract at residues 1 to 26 (MATKKAGGSSRNGRDSAGRRLGVKKS) is disordered.

This sequence belongs to the bacterial ribosomal protein bL27 family.

This is Large ribosomal subunit protein bL27 from Rickettsia prowazekii (strain Madrid E).